Consider the following 239-residue polypeptide: UDP-2,3-diacylglucosamine hydrolase (239 aa).

D8, H10, D41, N78, and H113 together coordinate Mn(2+). A substrate-binding site is contributed by 78–79 (NR). Substrate-binding residues include D121, S159, N163, K166, and H194. Positions 194 and 196 each coordinate Mn(2+).

This sequence belongs to the LpxH family. Mn(2+) is required as a cofactor.

Its subcellular location is the cell inner membrane. It carries out the reaction UDP-2-N,3-O-bis[(3R)-3-hydroxytetradecanoyl]-alpha-D-glucosamine + H2O = 2-N,3-O-bis[(3R)-3-hydroxytetradecanoyl]-alpha-D-glucosaminyl 1-phosphate + UMP + 2 H(+). It functions in the pathway glycolipid biosynthesis; lipid IV(A) biosynthesis; lipid IV(A) from (3R)-3-hydroxytetradecanoyl-[acyl-carrier-protein] and UDP-N-acetyl-alpha-D-glucosamine: step 4/6. In terms of biological role, hydrolyzes the pyrophosphate bond of UDP-2,3-diacylglucosamine to yield 2,3-diacylglucosamine 1-phosphate (lipid X) and UMP by catalyzing the attack of water at the alpha-P atom. Involved in the biosynthesis of lipid A, a phosphorylated glycolipid that anchors the lipopolysaccharide to the outer membrane of the cell. The chain is UDP-2,3-diacylglucosamine hydrolase from Shewanella sp. (strain MR-7).